The sequence spans 314 residues: tRNA-cytidine(32) 2-sulfurtransferase (314 aa).

The short motif at 49–54 (SGGKDS) is the PP-loop motif element. 3 residues coordinate [4Fe-4S] cluster: Cys-124, Cys-127, and Cys-215.

Belongs to the TtcA family. Homodimer. Mg(2+) serves as cofactor. The cofactor is [4Fe-4S] cluster.

The protein resides in the cytoplasm. It catalyses the reaction cytidine(32) in tRNA + S-sulfanyl-L-cysteinyl-[cysteine desulfurase] + AH2 + ATP = 2-thiocytidine(32) in tRNA + L-cysteinyl-[cysteine desulfurase] + A + AMP + diphosphate + H(+). It functions in the pathway tRNA modification. Functionally, catalyzes the ATP-dependent 2-thiolation of cytidine in position 32 of tRNA, to form 2-thiocytidine (s(2)C32). The sulfur atoms are provided by the cysteine/cysteine desulfurase (IscS) system. The chain is tRNA-cytidine(32) 2-sulfurtransferase from Histophilus somni (strain 2336) (Haemophilus somnus).